The primary structure comprises 365 residues: Growth-regulating factor 7 (365 aa).

Residues 59–94 (PFTNAQLKELERQAMIYKYMIASIPVPFDLLVSSPS) form the QLQ domain. A WRC domain is found at 107–151 (DLEPGRCRRTDGKKWRCAKEVVSNHKYCEKHLHRGRPRSRKHVEP). 2 short sequence motifs (bipartite nuclear localization signal) span residues 112 to 122 (RCRRTDGKKWR) and 140 to 147 (RGRPRSRK). Positions 137 to 147 (HLHRGRPRSRK) are enriched in basic residues. Disordered stretches follow at residues 137 to 187 (HLHR…TLEP) and 332 to 365 (IESY…SSQV). A compositionally biased stretch (polar residues) spans 337 to 365 (LMETPTPSSSPSRVMKKMTSSVSDESSQV).

This sequence belongs to the GRF family.

Its subcellular location is the nucleus. Transcription activator that plays a role in the regulation of cell expansion in leaf and cotyledons tissues. Component of a network formed by miR396, the GRFs and their interacting factors (GIFs) acting in the regulation of meristem function, at least partially through the control of cell proliferation. The protein is Growth-regulating factor 7 (GRF7) of Arabidopsis thaliana (Mouse-ear cress).